We begin with the raw amino-acid sequence, 65 residues long: Large ribosomal subunit protein bL35 (65 aa).

Belongs to the bacterial ribosomal protein bL35 family.

This chain is Large ribosomal subunit protein bL35, found in Proteus mirabilis (strain HI4320).